The chain runs to 567 residues: Urease subunit alpha (567 aa).

Residues 128-567 enclose the Urease domain; sequence GGVDTHVHYI…LPLAQRYHLF (440 aa). Ni(2+)-binding residues include His133, His135, and Lys216. Lys216 bears the N6-carboxylysine mark. A substrate-binding site is contributed by His218. Ni(2+)-binding residues include His245 and His271. Catalysis depends on His319, which acts as the Proton donor. Ni(2+) is bound at residue Asp359.

This sequence belongs to the metallo-dependent hydrolases superfamily. Urease alpha subunit family. Heterotrimer of UreA (gamma), UreB (beta) and UreC (alpha) subunits. Three heterotrimers associate to form the active enzyme. It depends on Ni cation as a cofactor. In terms of processing, carboxylation allows a single lysine to coordinate two nickel ions.

The protein resides in the cytoplasm. The enzyme catalyses urea + 2 H2O + H(+) = hydrogencarbonate + 2 NH4(+). It participates in nitrogen metabolism; urea degradation; CO(2) and NH(3) from urea (urease route): step 1/1. In Pseudoalteromonas translucida (strain TAC 125), this protein is Urease subunit alpha.